The following is a 513-amino-acid chain: MQLNSTEISDLIKQRIEQFEVVSEARNEGTIVAVSDGIIRINGLADVMQGEMIELPGNRYAIALNLERDSVGAVVMGSYAGLAEGVKVKTTGRILEVPVGRGLLGRVLNTLGEPIDGKGPVDNDGYSPIEVIAPGVIERQSVDEPVQTGYKTVDSMIPIGRGQRELVIGDRQTGKTALAIDAIINQKESGIKCVYVAIGQKASTIANVVRKLEEHGALANTIVVVATASEAAALQYLAPYSGCSMGEYFRDRGEDALIVYDDLSKQAVAYRQISLLLKRPPGREAYPGDVFYLHSRLLERASRVNANYVEKFTKGAVTGKTGSLTALPIIETQAGDVSAFVPTNVISITDGQIFLETDLFNSGLRPAVNPGISVSRVGGAAQTKIIKKLSGGIRTALAQYRELAAFSQFASDLDDATRAQLEHGERVTELMKQKQYAPMSVAAQAVVIYAAEKGYLKSVALNKVGHFEAALLSFMNSEYAALMTNINATGDYNADIEGEIKAALDKFVATQTW.

Residue 169–176 (GDRQTGKT) participates in ATP binding.

It belongs to the ATPase alpha/beta chains family. In terms of assembly, F-type ATPases have 2 components, CF(1) - the catalytic core - and CF(0) - the membrane proton channel. CF(1) has five subunits: alpha(3), beta(3), gamma(1), delta(1), epsilon(1). CF(0) has three main subunits: a(1), b(2) and c(9-12). The alpha and beta chains form an alternating ring which encloses part of the gamma chain. CF(1) is attached to CF(0) by a central stalk formed by the gamma and epsilon chains, while a peripheral stalk is formed by the delta and b chains.

It localises to the cell inner membrane. It carries out the reaction ATP + H2O + 4 H(+)(in) = ADP + phosphate + 5 H(+)(out). Functionally, produces ATP from ADP in the presence of a proton gradient across the membrane. The alpha chain is a regulatory subunit. This chain is ATP synthase subunit alpha, found in Shewanella denitrificans (strain OS217 / ATCC BAA-1090 / DSM 15013).